Consider the following 225-residue polypeptide: MRNRIRLALIPVAVAAIALAGCSKTDKADPNLPEAATLLSESAATTKTQTSTHIVLKVTGDKPTLKLSDLTGDLTTKPAVAAKGTAKTGGLELPFVVVDGELFAQLGSAYSSMGPVKDVYDVGLILDPNKGLANLLANITGAKSEKTETIDGVDSVLVTGTMSKDALNTFTGGTTLTADIPAKAWIQKDGNHALTKISVDTSPGNTIEMSLSDWGKPVTVDKPAQ.

An N-terminal signal peptide occupies residues 1 to 21 (MRNRIRLALIPVAVAAIALAG). The N-palmitoyl cysteine moiety is linked to residue cysteine 22. Cysteine 22 is lipidated: S-diacylglycerol cysteine.

It belongs to the LppX/LprAFG lipoprotein family. Modified by Lgt on Cys-22 with an S-linked diacylglyceral, signal peptide is removed by LspA, Cys-22 is further modifed with a fatty acid on its amino group by Lnt yielding a triacylated protein.

It localises to the cell inner membrane. Its function is as follows. Helps membrane protein MAB_2807 (P55) transport triacylglycerides (TAG) across the inner cell membrane into the periplasm and probably ultimately to the outer membrane. Binds TAG in its hydrophobic cavity and transfers it between lipid bilayers. TAG probably regulates lipid metabolism and growth regulation and plays a structural role in the outer membrane. Also binds mannosides, lipoarabinomannan and lipomannan and various glycolipids in the same cavity. The polypeptide is Lipoarabinomannan carrier protein LprG (Mycobacteroides abscessus (strain ATCC 19977 / DSM 44196 / CCUG 20993 / CIP 104536 / JCM 13569 / NCTC 13031 / TMC 1543 / L948) (Mycobacterium abscessus)).